Reading from the N-terminus, the 95-residue chain is Large ribosomal subunit protein uL23cz/uL23cy (95 aa).

It belongs to the universal ribosomal protein uL23 family. In terms of assembly, part of the 50S ribosomal subunit.

The protein resides in the plastid. Its subcellular location is the chloroplast. Its function is as follows. Binds to 23S rRNA. The sequence is that of Large ribosomal subunit protein uL23cz/uL23cy (rpl23-A) from Amborella trichopoda.